The following is a 389-amino-acid chain: Chorismate synthase (389 aa).

Residues arginine 39 and arginine 45 each contribute to the NADP(+) site. Residues 130–132, 251–252, glycine 296, 311–315, and arginine 338 contribute to the FMN site; these read RSS, NA, and KPIPT.

This sequence belongs to the chorismate synthase family. As to quaternary structure, homotetramer. FMNH2 is required as a cofactor.

It carries out the reaction 5-O-(1-carboxyvinyl)-3-phosphoshikimate = chorismate + phosphate. Its pathway is metabolic intermediate biosynthesis; chorismate biosynthesis; chorismate from D-erythrose 4-phosphate and phosphoenolpyruvate: step 7/7. Functionally, catalyzes the anti-1,4-elimination of the C-3 phosphate and the C-6 proR hydrogen from 5-enolpyruvylshikimate-3-phosphate (EPSP) to yield chorismate, which is the branch point compound that serves as the starting substrate for the three terminal pathways of aromatic amino acid biosynthesis. This reaction introduces a second double bond into the aromatic ring system. This is Chorismate synthase from Oceanobacillus iheyensis (strain DSM 14371 / CIP 107618 / JCM 11309 / KCTC 3954 / HTE831).